A 248-amino-acid polypeptide reads, in one-letter code: PF03932 family protein CutC (248 aa).

The protein belongs to the CutC family. Homodimer.

Its subcellular location is the cytoplasm. The protein is PF03932 family protein CutC of Escherichia coli (strain 55989 / EAEC).